The sequence spans 288 residues: 4-diphosphocytidyl-2-C-methyl-D-erythritol kinase (288 aa).

Lys13 is an active-site residue. 97–107 (PMGGGIGGGSS) contributes to the ATP binding site. Residue Asp139 is part of the active site.

Belongs to the GHMP kinase family. IspE subfamily.

The catalysed reaction is 4-CDP-2-C-methyl-D-erythritol + ATP = 4-CDP-2-C-methyl-D-erythritol 2-phosphate + ADP + H(+). Its pathway is isoprenoid biosynthesis; isopentenyl diphosphate biosynthesis via DXP pathway; isopentenyl diphosphate from 1-deoxy-D-xylulose 5-phosphate: step 3/6. Catalyzes the phosphorylation of the position 2 hydroxy group of 4-diphosphocytidyl-2C-methyl-D-erythritol. The sequence is that of 4-diphosphocytidyl-2-C-methyl-D-erythritol kinase from Saccharophagus degradans (strain 2-40 / ATCC 43961 / DSM 17024).